Here is a 465-residue protein sequence, read N- to C-terminus: Hepatocyte nuclear factor 6 (465 aa).

Disordered regions lie at residues 17–55, 120–141, 264–290, and 442–465; these read SHEP…SMGM, DKFP…HQRL, LLGT…GQME, and DKWQ…CTKA. Over residues 123-140 the composition is skewed to basic residues; it reads PHHHHHHHHHHHPHHHQR. Over residues 273–288 the composition is skewed to polar residues; the sequence is PSVTGAQVSNGSNSGQ. Positions 283–369 form a DNA-binding region, CUT; sequence GSNSGQMEEI…QRMSALRLAA (87 aa). The homeobox DNA-binding region spans 385–444; it reads PKKPRLVFTDVQRRTLHAIFKENKRPSKELQITISQQLGLELSTVSNFFMNARRRSLDKW. Positions 448–465 are enriched in low complexity; that stretch reads GSSNSGNSSSSSSTCTKA.

It belongs to the CUT homeobox family. In terms of assembly, binds DNA as a monomer. As to expression, highly expressed in liver; lower expression in testis and skin.

It localises to the nucleus. Transcriptional activator. Binds the consensus sequence 5'-DHWATTGAYTWWD-3' on a variety of gene promoters such as those of HNF3B and TTR. Important for liver genes transcription. This is Hepatocyte nuclear factor 6 (ONECUT1) from Homo sapiens (Human).